A 326-amino-acid polypeptide reads, in one-letter code: Elongation factor Ts (326 aa).

The segment at T80–V83 is involved in Mg(2+) ion dislocation from EF-Tu.

This sequence belongs to the EF-Ts family.

Its subcellular location is the cytoplasm. Its function is as follows. Associates with the EF-Tu.GDP complex and induces the exchange of GDP to GTP. It remains bound to the aminoacyl-tRNA.EF-Tu.GTP complex up to the GTP hydrolysis stage on the ribosome. This Rhodopirellula baltica (strain DSM 10527 / NCIMB 13988 / SH1) protein is Elongation factor Ts.